The primary structure comprises 260 residues: ATP synthase subunit a (260 aa).

The next 5 helical transmembrane spans lie at 27–47 (FWTVNIDSMIFSVLLGALFIW), 90–110 (IAPLGLTVFVWIFLMNLMDLI), 132–154 (SADVNITMSMALGVFFLILYYSI), 208–228 (LIFILIAGLLPWWSQWILSVP), and 230–250 (AIFHILIITLQAFIFMVLTIV).

The protein belongs to the ATPase A chain family. As to quaternary structure, F-type ATPases have 2 components, CF(1) - the catalytic core - and CF(0) - the membrane proton channel. CF(1) has five subunits: alpha(3), beta(3), gamma(1), delta(1), epsilon(1). CF(0) has three main subunits: a(1), b(2) and c(9-12). The alpha and beta chains form an alternating ring which encloses part of the gamma chain. CF(1) is attached to CF(0) by a central stalk formed by the gamma and epsilon chains, while a peripheral stalk is formed by the delta and b chains.

The protein resides in the cell inner membrane. Key component of the proton channel; it plays a direct role in the translocation of protons across the membrane. In Aeromonas hydrophila subsp. hydrophila (strain ATCC 7966 / DSM 30187 / BCRC 13018 / CCUG 14551 / JCM 1027 / KCTC 2358 / NCIMB 9240 / NCTC 8049), this protein is ATP synthase subunit a.